A 736-amino-acid polypeptide reads, in one-letter code: Gingipain R2 (736 aa).

An N-terminal signal peptide occupies residues 1-24 (MKKNFSRIVSIVAFSSLLGGMAFA). Residues 25-229 (QPAERGRNPQ…SVFMNYEATR (205 aa)) constitute a propeptide that is removed on maturation. The Ca(2+) site is built by Asp307, Val329, Asp332, Tyr334, Glu336, Glu390, and His395. The active-site Proton donor is His440. Catalysis depends on Cys473, which acts as the Nucleophile. Residues Phe478, Glu487, Asp521, Glu522, Glu525, His531, Asp613, and Glu639 each contribute to the Ca(2+) site.

The protein belongs to the peptidase C25 family.

The protein localises to the secreted. The enzyme catalyses Hydrolysis of proteins and small molecule substrates, with a preference for Arg in P1.. Thiol protease. Acts synergistically with RgpA to catalyze the maturation of fimbrial subunits, such as FimA. Its proteolytic activity is a major factor in both periodontal tissue destruction and in evasion of host defense mechanisms. In Porphyromonas gingivalis (strain ATCC 33277 / DSM 20709 / CIP 103683 / JCM 12257 / NCTC 11834 / 2561), this protein is Gingipain R2.